The sequence spans 947 residues: DEAD-box ATP-dependent RNA helicase 45 (947 aa).

The segment covering Met-1–Glu-14 has biased composition (acidic residues). Disordered stretches follow at residues Met-1–Ile-132 and Ser-159–Met-221. Composition is skewed to basic and acidic residues over residues Ser-15–Asp-31 and Lys-42–Glu-61. Positions Ala-62 to Gly-82 are enriched in low complexity. Composition is skewed to acidic residues over residues Asp-88–Gly-108 and Asp-196–Glu-219. Residues Lys-285 to Ala-313 carry the Q motif motif. A Helicase ATP-binding domain is found at Leu-316 to Ile-494. ATP is bound at residue Ala-329–Thr-336. The short motif at Asp-442–Asp-445 is the DEAD box element. The region spanning Gln-479–Ala-647 is the Helicase C-terminal domain. Residues Thr-658–Arg-710 form a disordered region. Residues Asp-697 to Glu-706 show a composition bias toward acidic residues. Positions Thr-854 to Leu-879 form a coiled coil.

This sequence belongs to the DEAD box helicase family. DDX46/PRP5 subfamily.

It catalyses the reaction ATP + H2O = ADP + phosphate + H(+). The chain is DEAD-box ATP-dependent RNA helicase 45 from Oryza sativa subsp. japonica (Rice).